Consider the following 198-residue polypeptide: dTTP/UTP pyrophosphatase (198 aa).

Asp75 (proton acceptor) is an active-site residue.

Belongs to the Maf family. YhdE subfamily. Requires a divalent metal cation as cofactor.

It localises to the cytoplasm. It carries out the reaction dTTP + H2O = dTMP + diphosphate + H(+). The catalysed reaction is UTP + H2O = UMP + diphosphate + H(+). In terms of biological role, nucleoside triphosphate pyrophosphatase that hydrolyzes dTTP and UTP. May have a dual role in cell division arrest and in preventing the incorporation of modified nucleotides into cellular nucleic acids. This chain is dTTP/UTP pyrophosphatase, found in Wolbachia sp. subsp. Brugia malayi (strain TRS).